The primary structure comprises 337 residues: Probable sulfurtransferase (337 aa).

G83 provides a ligand contact to ATP. The [4Fe-4S] cluster site is built by C172 and C175. 2 residues coordinate ATP: K179 and G206. Residue C284 participates in [4Fe-4S] cluster binding.

The protein belongs to the TtcA family. The cofactor is [4Fe-4S] cluster. It depends on Mg(2+) as a cofactor.

This is Probable sulfurtransferase from Methanocaldococcus jannaschii (strain ATCC 43067 / DSM 2661 / JAL-1 / JCM 10045 / NBRC 100440) (Methanococcus jannaschii).